Here is a 594-residue protein sequence, read N- to C-terminus: Zinc finger protein 467 (594 aa).

Positions 1 to 70 (MRETLEALNS…HTEQAEAPCM (70 aa)) are disordered. A Glycyl lysine isopeptide (Lys-Gly) (interchain with G-Cter in SUMO2) cross-link involves residue K97. 12 C2H2-type zinc fingers span residues 160-182 (YGCEECERRFRDQLTLRLHQRLH), 188-210 (CACPDCGRSFTQRAHMLLHQRSH), 216-238 (FPCSECDKRFSKKAHLTRHLRTH), 244-266 (YPCAECGKRFSQKIHLGSHQKTH), 272-294 (FPCTECEKRFRKKTHLIRHQRIH), 300-322 (YQCTQCTRSFTHKQHLVRHQRVH), 355-377 (FACSHCGQSFGWKKNLATHQSLH), 430-452 (FFCPDCGRGFAHGQHLARHRRVH), 458-480 (FACAQCGRRFGSRPNLVAHSRAH), 486-508 (FACAQCGRRFSRKSHLGRHQAVH), 514-536 (HACAVCARCFSSKTNLVRHQAIH), and 542-564 (FSCPQCAKSFSRKTHLVRHQRIH). Residues 313-350 (QHLVRHQRVHDAASRTRSSPDIPATPHPPTASLAPSPT) are disordered. K368 participates in a covalent cross-link: Glycyl lysine isopeptide (Lys-Gly) (interchain with G-Cter in SUMO2).

It belongs to the krueppel C2H2-type zinc-finger protein family. Interacts with STAT3. Enhances STAT3 activity by keeping it in the nucleus.

The protein resides in the nucleus. In terms of biological role, transcription factor that promotes adipocyte differentiation and suppresses osteoblast differentiation in the bone marrow. Enhances the osteoclast-supporting ability of stromal cells. Binds with STAT3 the consensus sequence 5'-CTTCTGGGAAGA-3' of the acute phase response element (APRE). Transactivates several promoters including FOS, OSM and PPARG. Recruits a histone deacetylase complex. This Rattus norvegicus (Rat) protein is Zinc finger protein 467 (Znf467).